Reading from the N-terminus, the 189-residue chain is Large ribosomal subunit protein bL9 (189 aa).

The protein belongs to the bacterial ribosomal protein bL9 family.

Its function is as follows. Binds to the 23S rRNA. The polypeptide is Large ribosomal subunit protein bL9 (Cereibacter sphaeroides (strain ATCC 17023 / DSM 158 / JCM 6121 / CCUG 31486 / LMG 2827 / NBRC 12203 / NCIMB 8253 / ATH 2.4.1.) (Rhodobacter sphaeroides)).